The primary structure comprises 254 residues: MATIKEIQQRLELVTELSDSFLEEVAKDQRSGVQKAVEKRKKAIQAELDEDLRLDQMIRYEKELYQSGYQAIAGIDEVGRGPLAGPVVAAAVILPPGCKIKGLNDSKKIPKKKHQEIYQAVMDKALAVGIGLMDSDIIDKVNIYEATKLAMKEALSKLPLKPDYLLIDAMKLDVEIPQESIIKGDANSLSIAAASIVAKVTRDRLMADYDKEFPGYAFAQNAGYGTKRHLEGLEHYGVSPIHRKTFEPVKSMLG.

In terms of domain architecture, RNase H type-2 spans 70–254 (QAIAGIDEVG…TFEPVKSMLG (185 aa)). D76, E77, and D168 together coordinate a divalent metal cation.

Belongs to the RNase HII family. Requires Mn(2+) as cofactor. The cofactor is Mg(2+).

The protein localises to the cytoplasm. It carries out the reaction Endonucleolytic cleavage to 5'-phosphomonoester.. Its function is as follows. Endonuclease that specifically degrades the RNA of RNA-DNA hybrids. The sequence is that of Ribonuclease HII from Streptococcus gordonii (strain Challis / ATCC 35105 / BCRC 15272 / CH1 / DL1 / V288).